The primary structure comprises 339 residues: Alpha-N-dichloroacetyl-p-aminophenylserinol N-oxygenase (339 aa).

Basic and acidic residues predominate over residues 1 to 19 (MRDHTDEKSEAAGNDDGHV). The interval 1–22 (MRDHTDEKSEAAGNDDGHVRIG) is disordered. The Fe cation site is built by E109, E144, H147, E205, H232, E236, and H239.

This sequence belongs to the AurF N-oxygenase family. It depends on Fe(2+) as a cofactor.

It catalyses the reaction alpha-N-dichloroacetyl-p-aminophenylserinol + AH2 + 2 O2 = chloramphenicol + A + 2 H2O. It participates in antibiotic biosynthesis. In terms of biological role, involved in chloramphenicol biosynthesis. Catalyzes the six-electron oxidation of an aryl-amine precursor of chloramphenicol (NH2-CAM) to yield the aryl-nitro group of chloramphenicol (CAM). During catalysis, upon exposure of the diferrous cluster to O(2), ClmI forms an exceptionally long-lived peroxo intermediate (CmlI-peroxo), which reacts with NH2-CAM to form CAM. The sequence is that of Alpha-N-dichloroacetyl-p-aminophenylserinol N-oxygenase from Streptomyces venezuelae (strain ATCC 10712 / CBS 650.69 / DSM 40230 / JCM 4526 / NBRC 13096 / PD 04745).